A 721-amino-acid chain; its full sequence is Methionine--tRNA ligase (721 aa).

Positions 27–37 match the 'HIGH' region motif; sequence PYANGQIHIGH. The Zn(2+) site is built by cysteine 158, cysteine 161, cysteine 171, and cysteine 174. Residues 348 to 352 carry the 'KMSKS' region motif; sequence KMSKS. Lysine 351 is an ATP binding site. Residues 615–721 enclose the tRNA-binding domain; that stretch reads DFAKIDLRIA…SGAKPGMRVK (107 aa).

Belongs to the class-I aminoacyl-tRNA synthetase family. MetG type 1 subfamily. In terms of assembly, homodimer. It depends on Zn(2+) as a cofactor.

The protein localises to the cytoplasm. It carries out the reaction tRNA(Met) + L-methionine + ATP = L-methionyl-tRNA(Met) + AMP + diphosphate. Its function is as follows. Is required not only for elongation of protein synthesis but also for the initiation of all mRNA translation through initiator tRNA(fMet) aminoacylation. The sequence is that of Methionine--tRNA ligase from Burkholderia vietnamiensis (strain G4 / LMG 22486) (Burkholderia cepacia (strain R1808)).